A 274-amino-acid polypeptide reads, in one-letter code: Rhamnulose-1-phosphate aldolase (274 aa).

Glu117 is an active-site residue. His141, His143, and His212 together coordinate Zn(2+).

The protein belongs to the aldolase class II family. RhaD subfamily. Homotetramer. The cofactor is Zn(2+).

It localises to the cytoplasm. It carries out the reaction L-rhamnulose 1-phosphate = (S)-lactaldehyde + dihydroxyacetone phosphate. Its pathway is carbohydrate degradation; L-rhamnose degradation; glycerone phosphate from L-rhamnose: step 3/3. Its function is as follows. Catalyzes the reversible cleavage of L-rhamnulose-1-phosphate to dihydroxyacetone phosphate (DHAP) and L-lactaldehyde. This chain is Rhamnulose-1-phosphate aldolase, found in Pectobacterium carotovorum subsp. carotovorum (strain PC1).